The chain runs to 317 residues: Aspartate carbamoyltransferase catalytic subunit (317 aa).

Residues Arg66 and Thr67 each contribute to the carbamoyl phosphate site. An L-aspartate-binding site is contributed by Lys94. Arg116, His144, and Gln147 together coordinate carbamoyl phosphate. Residues Arg177 and Arg231 each contribute to the L-aspartate site. Residues Gly272 and Pro273 each contribute to the carbamoyl phosphate site.

It belongs to the aspartate/ornithine carbamoyltransferase superfamily. ATCase family. In terms of assembly, heterododecamer (2C3:3R2) of six catalytic PyrB chains organized as two trimers (C3), and six regulatory PyrI chains organized as three dimers (R2).

It carries out the reaction carbamoyl phosphate + L-aspartate = N-carbamoyl-L-aspartate + phosphate + H(+). The protein operates within pyrimidine metabolism; UMP biosynthesis via de novo pathway; (S)-dihydroorotate from bicarbonate: step 2/3. Its function is as follows. Catalyzes the condensation of carbamoyl phosphate and aspartate to form carbamoyl aspartate and inorganic phosphate, the committed step in the de novo pyrimidine nucleotide biosynthesis pathway. This is Aspartate carbamoyltransferase catalytic subunit from Rhodopseudomonas palustris (strain BisB18).